The chain runs to 154 residues: Small ribosomal subunit protein uS15 (154 aa).

A compositionally biased stretch (basic residues) spans 1-11 (MSRLHAHKRYH). The disordered stretch occupies residues 1-24 (MSRLHAHKRYHGQSGSKRPLRTTK).

It belongs to the universal ribosomal protein uS15 family. Part of the 30S ribosomal subunit.

In Nanoarchaeum equitans (strain Kin4-M), this protein is Small ribosomal subunit protein uS15.